A 306-amino-acid chain; its full sequence is UDP-3-O-acyl-N-acetylglucosamine deacetylase (306 aa).

The Zn(2+) site is built by His-79, His-238, and Asp-242. Residue His-265 is the Proton donor of the active site.

Belongs to the LpxC family. Zn(2+) serves as cofactor.

It carries out the reaction a UDP-3-O-[(3R)-3-hydroxyacyl]-N-acetyl-alpha-D-glucosamine + H2O = a UDP-3-O-[(3R)-3-hydroxyacyl]-alpha-D-glucosamine + acetate. The protein operates within glycolipid biosynthesis; lipid IV(A) biosynthesis; lipid IV(A) from (3R)-3-hydroxytetradecanoyl-[acyl-carrier-protein] and UDP-N-acetyl-alpha-D-glucosamine: step 2/6. In terms of biological role, catalyzes the hydrolysis of UDP-3-O-myristoyl-N-acetylglucosamine to form UDP-3-O-myristoylglucosamine and acetate, the committed step in lipid A biosynthesis. The protein is UDP-3-O-acyl-N-acetylglucosamine deacetylase of Shewanella sediminis (strain HAW-EB3).